Consider the following 266-residue polypeptide: MRLIPLTTAEQVGKWAARHIVNRINAFKPTANRPFVLGLPTGGTPMTTYKALVEMHKAGQVSFKHVITFNMDEYVGLPKEHPESYYSFMHRNFFDHVDIPAENINLLNGNALDIDAECRQYEEKIRSYGKIHLFMGGVGNDGHIAFNEPASSLASRTRIKTLTHDTRVANSRFFDNDVNQVPKYALTVGVGTLLDAEEVMILVLGSQKALALQAAVEGCVNHMWTISCLQLHPKAIMVCDEPSTMELKVKTLRYFNELEAENIKGL.

The active-site Proton acceptor; for enolization step is the Asp-72. The active-site For ring-opening step is the Asp-141. His-143 serves as the catalytic Proton acceptor; for ring-opening step. The For ring-opening step role is filled by Glu-148.

This sequence belongs to the glucosamine/galactosamine-6-phosphate isomerase family. NagB subfamily. Homohexamer; trimer of disulfide-linked dimers.

The catalysed reaction is alpha-D-glucosamine 6-phosphate + H2O = beta-D-fructose 6-phosphate + NH4(+). The protein operates within amino-sugar metabolism; N-acetylneuraminate degradation; D-fructose 6-phosphate from N-acetylneuraminate: step 5/5. With respect to regulation, allosterically activated by N-acetylglucosamine 6-phosphate (GlcNAc6P). Functionally, catalyzes the reversible isomerization-deamination of glucosamine 6-phosphate (GlcN6P) to form fructose 6-phosphate (Fru6P) and ammonium ion. This chain is Glucosamine-6-phosphate deaminase, found in Shigella dysenteriae serotype 1 (strain Sd197).